The sequence spans 464 residues: UDP-N-acetylmuramate--L-alanine ligase (464 aa).

111–117 (GAHGKTT) contacts ATP.

This sequence belongs to the MurCDEF family.

The protein resides in the cytoplasm. The catalysed reaction is UDP-N-acetyl-alpha-D-muramate + L-alanine + ATP = UDP-N-acetyl-alpha-D-muramoyl-L-alanine + ADP + phosphate + H(+). Its pathway is cell wall biogenesis; peptidoglycan biosynthesis. Cell wall formation. The protein is UDP-N-acetylmuramate--L-alanine ligase of Dictyoglomus turgidum (strain DSM 6724 / Z-1310).